We begin with the raw amino-acid sequence, 192 residues long: Ion-translocating oxidoreductase complex subunit A (192 aa).

The next 6 helical transmembrane spans lie at 5-25 (ILLI…FLGL), 39-59 (VGMG…AYLV), 63-83 (ILIP…VIAV), 102-122 (LLGI…VALL), 134-154 (VVYG…FAAL), and 171-191 (AIAL…TGLV).

This sequence belongs to the NqrDE/RnfAE family. In terms of assembly, the complex is composed of six subunits: RnfA, RnfB, RnfC, RnfD, RnfE and RnfG.

Its subcellular location is the cell inner membrane. In terms of biological role, part of a membrane-bound complex that couples electron transfer with translocation of ions across the membrane. This is Ion-translocating oxidoreductase complex subunit A from Haemophilus influenzae (strain 86-028NP).